The sequence spans 44 residues: Small hydrophobic protein (44 aa).

At Met-1–Arg-16 the chain is on the intravirion side. Residues Ala-17–Pro-37 traverse the membrane as a helical; Signal-anchor for type II membrane protein segment. Residues Thr-38 to Ser-44 are Virion surface-facing.

It belongs to the rubulavirus small hydrophobic protein family.

Its subcellular location is the virion membrane. The protein localises to the host cell membrane. Functionally, inhibits TNF-alpha signaling and seems to block apoptosis in host infected cells. The sequence is that of Small hydrophobic protein (SH) from Parainfluenza virus 5 (strain W3) (PIV5).